We begin with the raw amino-acid sequence, 89 residues long: Small ribosomal subunit protein uS15 (89 aa).

Residues 1–11 are compositionally biased toward basic and acidic residues; that stretch reads MSIAAERKAEV. Residues 1-24 are disordered; it reads MSIAAERKAEVIKTNATKAGDTGS.

This sequence belongs to the universal ribosomal protein uS15 family. In terms of assembly, part of the 30S ribosomal subunit. Forms a bridge to the 50S subunit in the 70S ribosome, contacting the 23S rRNA.

One of the primary rRNA binding proteins, it binds directly to 16S rRNA where it helps nucleate assembly of the platform of the 30S subunit by binding and bridging several RNA helices of the 16S rRNA. In terms of biological role, forms an intersubunit bridge (bridge B4) with the 23S rRNA of the 50S subunit in the ribosome. In Bradyrhizobium diazoefficiens (strain JCM 10833 / BCRC 13528 / IAM 13628 / NBRC 14792 / USDA 110), this protein is Small ribosomal subunit protein uS15.